A 200-amino-acid chain; its full sequence is Dephospho-CoA kinase (200 aa).

A DPCK domain is found at 3 to 200; it reads IFGLTGGIGS…LNVNNKCNMD (198 aa). Residue 11 to 16 participates in ATP binding; that stretch reads GSGKSL.

The protein belongs to the CoaE family.

Its subcellular location is the cytoplasm. It catalyses the reaction 3'-dephospho-CoA + ATP = ADP + CoA + H(+). It functions in the pathway cofactor biosynthesis; coenzyme A biosynthesis; CoA from (R)-pantothenate: step 5/5. Catalyzes the phosphorylation of the 3'-hydroxyl group of dephosphocoenzyme A to form coenzyme A. The sequence is that of Dephospho-CoA kinase from Ehrlichia canis (strain Jake).